A 174-amino-acid polypeptide reads, in one-letter code: Protein-export protein SecB (174 aa).

The protein belongs to the SecB family. In terms of assembly, homotetramer, a dimer of dimers. One homotetramer interacts with 1 SecA dimer.

It is found in the cytoplasm. One of the proteins required for the normal export of preproteins out of the cell cytoplasm. It is a molecular chaperone that binds to a subset of precursor proteins, maintaining them in a translocation-competent state. It also specifically binds to its receptor SecA. The protein is Protein-export protein SecB of Ehrlichia ruminantium (strain Gardel).